A 370-amino-acid polypeptide reads, in one-letter code: Putative L-lysine 2,3-aminomutase aq_454 (370 aa).

Residues histidine 107 to proline 322 enclose the Radical SAM core domain. 3 residues coordinate [4Fe-4S] cluster: cysteine 121, cysteine 125, and cysteine 128. Lysine 334 is subject to N6-(pyridoxal phosphate)lysine.

The protein belongs to the radical SAM superfamily. KamA family. [4Fe-4S] cluster serves as cofactor. It depends on pyridoxal 5'-phosphate as a cofactor.

This chain is Putative L-lysine 2,3-aminomutase aq_454, found in Aquifex aeolicus (strain VF5).